Reading from the N-terminus, the 255-residue chain is Sec-independent protein translocase protein TatC (255 aa).

7 helical membrane passes run 28–48 (VAAVLLIFAALFYFAQDIYAL), 56–76 (YLPEGATMIATGVASPFLAPF), 80–100 (LMISLFLAMPVVLHQVWGFIA), 121–141 (LFYAGMAFAYFVVFPIMFGFF), 165–185 (LFFAFGVAFEVPVATFLLIWV), 195–212 (NSRPYVIVGCFVVGMVLT), and 216–236 (VFSQTLLAVPMWLLFEIGVFF).

Belongs to the TatC family. As to quaternary structure, the Tat system comprises two distinct complexes: a TatABC complex, containing multiple copies of TatA, TatB and TatC subunits, and a separate TatA complex, containing only TatA subunits. Substrates initially bind to the TatABC complex, which probably triggers association of the separate TatA complex to form the active translocon.

The protein localises to the cell membrane. In terms of biological role, part of the twin-arginine translocation (Tat) system that transports large folded proteins containing a characteristic twin-arginine motif in their signal peptide across membranes. Together with TatB, TatC is part of a receptor directly interacting with Tat signal peptides. The chain is Sec-independent protein translocase protein TatC from Azotobacter chroococcum mcd 1.